A 180-amino-acid chain; its full sequence is ATP synthase subunit delta (180 aa).

The protein belongs to the ATPase delta chain family. As to quaternary structure, F-type ATPases have 2 components, F(1) - the catalytic core - and F(0) - the membrane proton channel. F(1) has five subunits: alpha(3), beta(3), gamma(1), delta(1), epsilon(1). CF(0) has four main subunits: a(1), b(1), b'(1) and c(10-14). The alpha and beta chains form an alternating ring which encloses part of the gamma chain. F(1) is attached to F(0) by a central stalk formed by the gamma and epsilon chains, while a peripheral stalk is formed by the delta, b and b' chains.

The protein localises to the cellular thylakoid membrane. Its function is as follows. F(1)F(0) ATP synthase produces ATP from ADP in the presence of a proton or sodium gradient. F-type ATPases consist of two structural domains, F(1) containing the extramembraneous catalytic core and F(0) containing the membrane proton channel, linked together by a central stalk and a peripheral stalk. During catalysis, ATP synthesis in the catalytic domain of F(1) is coupled via a rotary mechanism of the central stalk subunits to proton translocation. Functionally, this protein is part of the stalk that links CF(0) to CF(1). It either transmits conformational changes from CF(0) to CF(1) or is implicated in proton conduction. The protein is ATP synthase subunit delta of Prochlorococcus marinus (strain MIT 9515).